A 2571-amino-acid chain; its full sequence is Highly reducing polyketide synthase 19 (2571 aa).

Residues 1 to 51 (MSPIFLGDSEDAATCRCGPPSSPSPELSGTETALTSDSDGPELLNPGPQGP) form a disordered region. A compositionally biased stretch (polar residues) spans 27–38 (LSGTETALTSDS). One can recognise a Ketosynthase family 3 (KS3) domain in the interval 51–485 (PEPIAIIGMG…GANAHCILES (435 aa)). Residues Cys-224, His-359, and His-398 each act as for beta-ketoacyl synthase activity in the active site. The tract at residues 609-932 (VFTGQGAQWA…PYNSALLRGK (324 aa)) is malonyl-CoA:ACP transacylase (MAT) domain. The active-site For malonyltransferase activity is Ser-701. The segment at 1019-1163 (HDLLGSRVPG…GLVKLTQNED (145 aa)) is N-terminal hotdog fold. Residues 1019–1340 (HDLLGSRVPG…SGCRMVPYSS (322 aa)) are dehydratase (DH) domain. Positions 1019-1344 (HDLLGSRVPG…MVPYSSGTAV (326 aa)) constitute a PKS/mFAS DH domain. His-1051 acts as the Proton acceptor; for dehydratase activity in catalysis. The segment at 1177-1344 (MEQSAPRTWY…MVPYSSGTAV (168 aa)) is C-terminal hotdog fold. Asp-1241 serves as the catalytic Proton donor; for dehydratase activity. The segment at 1800 to 2140 (NMSDAFVFTR…AFRALSGSTT (341 aa)) is enoyl reductase (ER) domain. The segment at 2177 to 2355 (SYLLVGCLGG…ATSVGLGMIS (179 aa)) is ketoreductase (KR) domain. The 79-residue stretch at 2490–2568 (AVAAQALELV…MLSELIAGKL (79 aa)) folds into the Carrier domain. Ser-2527 bears the O-(pantetheine 4'-phosphoryl)serine mark.

It participates in polyketide biosynthesis. Highly reducing polyketide synthase; part of the gene cluster that mediates the biosynthesis of pyriculol and pyriculariol, two heptaketides that induce lesion formation upon application on rice leaves but are dispensable for pathogenicity. The highly reducing polyketide synthase synthesizes the heptaketide backbone of pyriculol and pyriculariol. Pyriculol and pyriculariol contain several hydroxyl moieties and double bonds, so it can be assumed that several reduction steps occur during biosynthesis. These reactions could be executed by PKS19 itself or partly by the tailoring enzymes OXR1, PXR2, RED1, RED2 or RED3, identified within the cluster. The FAD-linked oxidoreductase OXR1 is the only tailoring enzyme for which the function has been determined yet, and is involved in the oxidation of dihydropyriculol and dihydropyriculariol into pyriculol and pyriculariol, respectively. This is Highly reducing polyketide synthase 19 from Pyricularia oryzae (strain 70-15 / ATCC MYA-4617 / FGSC 8958) (Rice blast fungus).